A 473-amino-acid chain; its full sequence is MTIMAPEAVGESLDPRDPLLRLSNFFDDGSVELLHERDRSGVLAAAGTVNGVRTIAFCTDGTVMGGAMGVEGCTHIVNAYDTAIEDQSPIVGIWHSGGARLAEGVRALHAVGQVFEAMIRASGYIPQISVVVGFAAGGAAYGPALTDVVVMAPESRVFVTGPDVVRSVTGEDVDMASLGGPETHHKKSGVCHIVADDELDAYDRGRRLVGLFCQQGHFDRSKAEAGDTDIHALLPESSRRAYDVRPIVTAILDADTPFDEFQANWAPSMVVGLGRLSGRTVGVLANNPLRLGGCLNSESAEKAARFVRLCDAFGIPLVVVVDVPGYLPGVDQEWGGVVRRGAKLLHAFGECTVPRVTLVTRKTYGGAYIAMNSRSLNATKVFAWPDAEVAVMGAKAAVGILHKKKLAAAPEHEREALHDQLAAEHERIAGGVDSALDIGVVDEKIDPAHTRSKLTEALAQAPARRGRHKNIPL.

Residues M1–E224 form the CoA carboxyltransferase N-terminal domain. The CoA carboxyltransferase C-terminal domain maps to A225–L473.

The protein belongs to the AccD/PCCB family. The biotin-dependent acyl-CoA carboxylase complex is composed of AccA3, which contains the biotin carboxylase (BC) and biotin carboxyl carrier protein (BCCP) domains, and AccD6, which contains the carboxyl transferase (CT) domain.

It carries out the reaction N(6)-carboxybiotinyl-L-lysyl-[protein] + acetyl-CoA = N(6)-biotinyl-L-lysyl-[protein] + malonyl-CoA. It catalyses the reaction N(6)-carboxybiotinyl-L-lysyl-[protein] + propanoyl-CoA = methylmalonyl-CoA + N(6)-biotinyl-L-lysyl-[protein]. It participates in lipid metabolism; fatty acid biosynthesis. Its pathway is lipid metabolism; mycolic acid biosynthesis. Component of a biotin-dependent acyl-CoA carboxylase complex. This subunit transfers the CO2 from carboxybiotin to the CoA ester substrate. When associated with the alpha3 subunit AccA3, is involved in the carboxylation of acetyl-CoA and propionyl-CoA. The protein is Biotin-dependent acetyl-/propionyl-coenzyme A carboxylase beta6 subunit (accD6) of Mycobacterium bovis (strain ATCC BAA-935 / AF2122/97).